The sequence spans 360 residues: Phospho-N-acetylmuramoyl-pentapeptide-transferase (360 aa).

The next 10 helical transmembrane spans lie at 26 to 46 (AILG…AMIR), 70 to 90 (GTPT…TLLW), 97 to 117 (FVWV…IDDY), 134 to 154 (FFWQ…TAQA), 168 to 188 (VAIQ…VGAS), 199 to 219 (GLAI…AYLS), 236 to 256 (VGDL…FLWF), 263 to 283 (VFMG…LAVV), 288 to 308 (IVLV…IMQV), and 338 to 358 (VIVR…ATLK).

The protein belongs to the glycosyltransferase 4 family. MraY subfamily. The cofactor is Mg(2+).

Its subcellular location is the cell inner membrane. It catalyses the reaction UDP-N-acetyl-alpha-D-muramoyl-L-alanyl-gamma-D-glutamyl-meso-2,6-diaminopimeloyl-D-alanyl-D-alanine + di-trans,octa-cis-undecaprenyl phosphate = di-trans,octa-cis-undecaprenyl diphospho-N-acetyl-alpha-D-muramoyl-L-alanyl-D-glutamyl-meso-2,6-diaminopimeloyl-D-alanyl-D-alanine + UMP. The protein operates within cell wall biogenesis; peptidoglycan biosynthesis. Its function is as follows. Catalyzes the initial step of the lipid cycle reactions in the biosynthesis of the cell wall peptidoglycan: transfers peptidoglycan precursor phospho-MurNAc-pentapeptide from UDP-MurNAc-pentapeptide onto the lipid carrier undecaprenyl phosphate, yielding undecaprenyl-pyrophosphoryl-MurNAc-pentapeptide, known as lipid I. This Thioalkalivibrio sulfidiphilus (strain HL-EbGR7) protein is Phospho-N-acetylmuramoyl-pentapeptide-transferase.